The primary structure comprises 559 residues: Acetylcholinesterase-1 (559 aa).

A signal peptide spans 1 to 21; the sequence is MMLPRCFVTVLLMSSVLYIGG. Residues Cys92 and Cys114 are joined by a disulfide bond. Position 142–143 (142–143) interacts with substrate; that stretch reads GG. The Acyl-ester intermediate role is filled by Ser223. The residue at position 223 (Ser223) is a Phosphoserine. The cysteines at positions 276 and 293 are disulfide-linked. N-linked (GlcNAc...) asparagine glycosylation is found at Asn278 and Asn342. Residue Glu354 is the Charge relay system of the active site. Asn374 is a glycosylation site (N-linked (GlcNAc...) asparagine). Cys432 and Cys550 are oxidised to a cystine. His471 acts as the Charge relay system in catalysis.

This sequence belongs to the type-B carboxylesterase/lipase family. Expressed by the venom gland.

It is found in the secreted. The enzyme catalyses acetylcholine + H2O = choline + acetate + H(+). Its function is as follows. Terminates signal transduction at the neuromuscular junction by rapid hydrolysis of the acetylcholine released into the synaptic cleft. The polypeptide is Acetylcholinesterase-1 (Trittame loki (Brush-footed trapdoor spider)).